A 359-amino-acid chain; its full sequence is DNA-directed RNA polymerase RPB3-11 homolog (359 aa).

It in the N-terminal section; belongs to the archaeal RpoD/eukaryotic RPB3 RNA polymerase subunit family. The protein in the C-terminal section; belongs to the archaeal RpoL/eukaryotic RPB11/RPC19 RNA polymerase subunit family. As to quaternary structure, part of the viral DNA-directed RNA polymerase that consists of 8 polII-like subunits (RPB1, RPB2, RPB3, RPB5, RPB6, RPB7, RPB9, RPB10), a capping enzyme and a termination factor.

The protein localises to the host cytoplasm. It localises to the virion. Its function is as follows. Component of the DNA-directed RNA polymerase (RNAP) that catalyzes the transcription in the cytoplasm of viral DNA into RNA using the four ribonucleoside triphosphates as substrates. The polypeptide is DNA-directed RNA polymerase RPB3-11 homolog (Ornithodoros (relapsing fever ticks)).